We begin with the raw amino-acid sequence, 95 residues long: Stationary phase-expressed protein 1 (95 aa).

A helical transmembrane segment spans residues 20–38; that stretch reads FRYIMLGLVGAAVVPTAYM.

It is found in the mitochondrion membrane. In Saccharomyces cerevisiae (strain RM11-1a) (Baker's yeast), this protein is Stationary phase-expressed protein 1 (SPG1).